A 180-amino-acid polypeptide reads, in one-letter code: ATP synthase subunit delta (180 aa).

It belongs to the ATPase delta chain family. As to quaternary structure, F-type ATPases have 2 components, F(1) - the catalytic core - and F(0) - the membrane proton channel. F(1) has five subunits: alpha(3), beta(3), gamma(1), delta(1), epsilon(1). F(0) has three main subunits: a(1), b(2) and c(10-14). The alpha and beta chains form an alternating ring which encloses part of the gamma chain. F(1) is attached to F(0) by a central stalk formed by the gamma and epsilon chains, while a peripheral stalk is formed by the delta and b chains.

It is found in the cell inner membrane. Functionally, f(1)F(0) ATP synthase produces ATP from ADP in the presence of a proton or sodium gradient. F-type ATPases consist of two structural domains, F(1) containing the extramembraneous catalytic core and F(0) containing the membrane proton channel, linked together by a central stalk and a peripheral stalk. During catalysis, ATP synthesis in the catalytic domain of F(1) is coupled via a rotary mechanism of the central stalk subunits to proton translocation. This protein is part of the stalk that links CF(0) to CF(1). It either transmits conformational changes from CF(0) to CF(1) or is implicated in proton conduction. The chain is ATP synthase subunit delta from Legionella pneumophila subsp. pneumophila (strain Philadelphia 1 / ATCC 33152 / DSM 7513).